The chain runs to 258 residues: Imidazole glycerol phosphate synthase subunit HisF (258 aa).

Catalysis depends on residues D11 and D130.

It belongs to the HisA/HisF family. As to quaternary structure, heterodimer of HisH and HisF.

The protein resides in the cytoplasm. It carries out the reaction 5-[(5-phospho-1-deoxy-D-ribulos-1-ylimino)methylamino]-1-(5-phospho-beta-D-ribosyl)imidazole-4-carboxamide + L-glutamine = D-erythro-1-(imidazol-4-yl)glycerol 3-phosphate + 5-amino-1-(5-phospho-beta-D-ribosyl)imidazole-4-carboxamide + L-glutamate + H(+). It functions in the pathway amino-acid biosynthesis; L-histidine biosynthesis; L-histidine from 5-phospho-alpha-D-ribose 1-diphosphate: step 5/9. IGPS catalyzes the conversion of PRFAR and glutamine to IGP, AICAR and glutamate. The HisF subunit catalyzes the cyclization activity that produces IGP and AICAR from PRFAR using the ammonia provided by the HisH subunit. The polypeptide is Imidazole glycerol phosphate synthase subunit HisF (Yersinia enterocolitica serotype O:8 / biotype 1B (strain NCTC 13174 / 8081)).